The sequence spans 345 residues: Opioid-binding protein/cell adhesion molecule (345 aa).

An N-terminal signal peptide occupies residues 1-27; the sequence is MGVCGYLFLPWKCLVVVSLRLLFLVPT. Ig-like C2-type domains lie at 39–126, 136–219, and 223–310; these read PKAM…PKTS, PQIM…VKIT, and PPYI…ASIT. Asparagine 44, asparagine 70, and asparagine 140 each carry an N-linked (GlcNAc...) asparagine glycan. Residues cysteine 57 and cysteine 115 are joined by a disulfide bond. 2 disulfide bridges follow: cysteine 157–cysteine 202 and cysteine 244–cysteine 296. Asparagine 285, asparagine 293, and asparagine 306 each carry an N-linked (GlcNAc...) asparagine glycan. Asparagine 322 is lipidated: GPI-anchor amidated asparagine. Residues 323-345 constitute a propeptide, removed in mature form; the sequence is SASRALACLWLSGTLLAHFFIKF.

It belongs to the immunoglobulin superfamily. IgLON family.

It localises to the cell membrane. Functionally, binds opioids in the presence of acidic lipids; probably involved in cell contact. The polypeptide is Opioid-binding protein/cell adhesion molecule (OPCML) (Homo sapiens (Human)).